Reading from the N-terminus, the 2214-residue chain is Non-reducing polyketide synthase dpmpA (2214 aa).

Residues 75–178 (EWIRTGDSHV…LAVCAGAWKD (104 aa)) are N-terminal acylcarrier protein transacylase domain (SAT). A Ketosynthase family 3 (KS3) domain is found at 372-784 (DESIAIVGAS…GNNTAMIVCQ (413 aa)). Residues cysteine 532, histidine 667, and histidine 707 each act as for beta-ketoacyl synthase activity in the active site. The tract at residues 888–1184 (VFAGQTGHRP…AFLSARLGSP (297 aa)) is malonyl-CoA:ACP transacylase (MAT) domain. Catalysis depends on serine 974, which acts as the For acyl/malonyl transferase activity. Positions 1255–1389 (PQLVSVVRSS…GIIKSQEQDR (135 aa)) are N-terminal hotdog fold. A PKS/mFAS DH domain is found at 1255–1566 (PQLVSVVRSS…FSKVPVRSLQ (312 aa)). A product template (PT) domain region spans residues 1265–1560 (GGADPEAAEF…AILGARFSKV (296 aa)). Positions 1416–1566 (GASVVQGAFV…FSKVPVRSLQ (151 aa)) are C-terminal hotdog fold. 2 consecutive Carrier domains span residues 1620-1695 (NEVK…HSRL) and 1722-1802 (KAST…SGAD). The residue at position 1654 (serine 1654) is an O-(pantetheine 4'-phosphoryl)serine. The tract at residues 1698–1728 (VPQLSPHDTDRSSDLSAGQPPSTPKASTQEQ) is disordered. A compositionally biased stretch (polar residues) spans 1711–1726 (DLSAGQPPSTPKASTQ). An O-(pantetheine 4'-phosphoryl)serine modification is found at serine 1762. The interval 1805 to 1827 (GFPRTSDNRRSEEGSVGHVGPEK) is disordered. Basic and acidic residues predominate over residues 1810 to 1827 (SDNRRSEEGSVGHVGPEK). The tract at residues 1958 to 2210 (FPAYRPDHRL…SREADLFRWI (253 aa)) is methyltransferase (CMeT) domain.

It participates in secondary metabolite biosynthesis; terpenoid biosynthesis. Functionally, non-reducing polyketide synthase; part of the gene cluster that mediates the biosynthesis of diterpenoid pyrones. The first step of the pathway is the synthesis of the alpha-pyrone moiety by the polyketide synthase dpmpA via condensation of one acetyl-CoA starter unit with 3 malonyl-CoA units and 2 methylations. The alpha-pyrone is then combined with geranylgeranyl pyrophosphate (GGPP) formed by the GGPP synthase dpmpD through the action of the prenyltransferase dpmpC to yield a linear alpha-pyrone diterpenoid. Subsequent steps in the diterpenoid pyrone biosynthetic pathway involve the decalin core formation, which is initiated by the epoxidation of the C10-C11 olefin by the FAD-dependent oxidoreductase dpmpE, and is followed by a cyclization cascade catalyzed by the terpene cyclase dpmpB. The short chain dehydrogenase/reductase dpmpG then oxidizes the 8S hydroxy group to a ketone and the short chain dehydrogenase/reductase dpmpH reduces the ketone to the 8R hydroxy group to yield higginsianin B. Higginsianin B is further methylated by the methyltransferase dpmpI to produce the intermediate named FDDP B. The cytochrome P450 monooxygenase dpmpJ then oxidizes the C-26 methyl to primary alcohol, producing the final diterpenoid pyrone with a C-26 primary alcohol on the gamma-pyrone moiety named FDDP C. This chain is Non-reducing polyketide synthase dpmpA, found in Macrophomina phaseolina (strain MS6) (Charcoal rot fungus).